The primary structure comprises 420 residues: Histidine--tRNA ligase (420 aa).

It belongs to the class-II aminoacyl-tRNA synthetase family. As to quaternary structure, homodimer.

It is found in the cytoplasm. The catalysed reaction is tRNA(His) + L-histidine + ATP = L-histidyl-tRNA(His) + AMP + diphosphate + H(+). The sequence is that of Histidine--tRNA ligase from Thermotoga sp. (strain RQ2).